The primary structure comprises 825 residues: Breast cancer anti-estrogen resistance protein 3 homolog (825 aa).

Ala2 carries the post-translational modification N-acetylalanine. Residues 31 to 93 form a disordered region; the sequence is KSPLTEHRPD…PVTQDSIQES (63 aa). 5 positions are modified to phosphoserine: Ser32, Ser78, Ser83, Ser182, and Ser290. Residues 75–93 are compositionally biased toward polar residues; sequence HSKSPQQNSPVTQDSIQES. In terms of domain architecture, SH2 spans 154–253; that stretch reads WYHGRIPRQV…QSGAIIFQPI (100 aa). The residue at position 334 (Lys334) is an N6-methyllysine. Phosphoserine is present on residues Ser358, Ser363, and Ser375. Omega-N-methylarginine is present on Arg442. Ser471 is modified (phosphoserine). Residues 548–818 form the Ras-GEF domain; sequence DPKVIAQHIL…TALSRKLEPP (271 aa). The mediates the interaction with BCAR1/p130CAS stretch occupies residues 744–748; that stretch reads LATAR.

As to quaternary structure, part of a complex comprised of PTPRA, BCAR1, BCAR3 (via SH2 domain) and SRC; the formation of the complex is dependent on integrin mediated-tyrosine phosphorylation of PTPRA. Within the complex, interacts (via SH2 domain) with PTPRA (when phosphorylated on 'Tyr-798'). Interacts (via Ras-GEF domain) with BCAR1. Interacts (via Ras-GEF domain) with NEDD9. Interacts with PTK2/FAK1. Interacts with PTPN1. Interacts (via SH2 domain) with EGFR (when tyrosine-phosphorylated). In terms of processing, phosphorylated on tyrosine residues.

The protein resides in the cytoplasm. The protein localises to the cell junction. It is found in the focal adhesion. Functionally, acts as an adapter protein downstream of several growth factor receptors to promote cell proliferation, migration, and redistribution of actin fibers. Specifically involved in INS/insulin signaling pathway by mediating MAPK1/ERK2-MAPK3/ERK1 activation and DNA synthesis. Promotes insulin-mediated membrane ruffling. In response to vasoconstrictor peptide EDN1, involved in the activation of RAP1 downstream of PTK2B via interaction with phosphorylated BCAR1. Inhibits cell migration and invasion via regulation of TGFB-mediated matrix digestion, actin filament rearrangement, and inhibition of invadopodia activity. May inhibit TGFB-SMAD signaling, via facilitating BCAR1 and SMAD2 and/or SMAD3 interaction. Regulates EGF-induced DNA synthesis. Required for the maintenance of ocular lens morphology and structural integrity, potentially via regulation of focal adhesion complex signaling. Acts upstream of PTPRA to regulate the localization of BCAR1 and PTPRA to focal adhesions, via regulation of SRC-mediated phosphorylation of PTPRA. Positively regulates integrin-induced tyrosine phosphorylation of BCAR1. Acts as a guanine nucleotide exchange factor (GEF) for small GTPases RALA, RAP1A and RRAS. However, in a contrasting study, lacks GEF activity towards RAP1. The protein is Breast cancer anti-estrogen resistance protein 3 homolog (BCAR3) of Macaca fascicularis (Crab-eating macaque).